The sequence spans 338 residues: MEKQTVAVLGPGSWGTALSQVLNDNGHEVRIWGNLPEQINEINTHHTNKHYFKDVVLDENIIAYTDLAETLKDVDAILFVVPTKVTRLVAQQVAQTLDHKVIIMHASKGLEPDSHKQLSTILEEEIPEHLRSDIVVVSGPSHAEETIVRDLTLITAASKDLQTAQYVQKLFSNHYFRLYTNTDVIGVETAGALKNIIAVGAGALHGLGFGDNAKAAIIARGLAEITRLGVALGASPLTYSGLSGVGDLIVTGTSIHSRNWRAGDALGRGESLADIEANMGMVIEGISTTRAAYELAQELGVYMPITQAIYQVIYHGTNIKDAIYDIMNNEFKAENEWS.

Positions 13, 14, and 108 each coordinate NADPH. The sn-glycerol 3-phosphate site is built by lysine 108, glycine 139, and serine 141. Alanine 143 contributes to the NADPH binding site. Lysine 194, aspartate 247, serine 257, arginine 258, and asparagine 259 together coordinate sn-glycerol 3-phosphate. Lysine 194 serves as the catalytic Proton acceptor. Position 258 (arginine 258) interacts with NADPH. Residues valine 282 and glutamate 284 each coordinate NADPH.

Belongs to the NAD-dependent glycerol-3-phosphate dehydrogenase family.

It is found in the cytoplasm. The catalysed reaction is sn-glycerol 3-phosphate + NAD(+) = dihydroxyacetone phosphate + NADH + H(+). It carries out the reaction sn-glycerol 3-phosphate + NADP(+) = dihydroxyacetone phosphate + NADPH + H(+). It participates in membrane lipid metabolism; glycerophospholipid metabolism. Functionally, catalyzes the reduction of the glycolytic intermediate dihydroxyacetone phosphate (DHAP) to sn-glycerol 3-phosphate (G3P), the key precursor for phospholipid synthesis. This is Glycerol-3-phosphate dehydrogenase [NAD(P)+] from Streptococcus pneumoniae (strain CGSP14).